The sequence spans 96 residues: Cathelin (96 aa).

Q1 carries the pyrrolidone carboxylic acid modification. Positions 31 to 50 are disordered; that stretch reads DQPPKADEDPGTPKPVSFTV. Cystine bridges form between C55–C66 and C73–C90.

The protein belongs to the cathelicidin family.

The protein localises to the secreted. Its function is as follows. Probably a microbicidal peptide. In Sus scrofa (Pig), this protein is Cathelin.